Here is a 731-residue protein sequence, read N- to C-terminus: Anaphase-promoting complex subunit 2 (731 aa).

The protein belongs to the cullin family. In terms of assembly, the APC/C is probably composed of at least 12 subunits: apc-2, apc-10, apc-11, cdc-26, emb-1, emb-27, emb-30, mat-1, mat-2, mat-3, such-1 and gfi-3.

Its pathway is protein modification; protein ubiquitination. Functionally, probable component of the anaphase promoting complex/cyclosome (APC/C), a cell cycle-regulated ubiquitin ligase that controls progression through mitosis and the G1 phase of the cell cycle. The APC/C complex acts by mediating ubiquitination and subsequent degradation of target proteins. Developmental role in early embryogenesis and the metaphase to anaphase transition in meiosis and mitosis. The chain is Anaphase-promoting complex subunit 2 from Caenorhabditis elegans.